The following is an 82-amino-acid chain: Toxin GTx1-15 (82 aa).

A signal peptide spans Met1–Ala21. Residues Ser22–Arg46 constitute a propeptide that is removed on maturation. 3 cysteine pairs are disulfide-bonded: Cys48/Cys63, Cys55/Cys69, and Cys62/Cys76. Residue Phe80 is modified to Phenylalanine amide.

The protein belongs to the neurotoxin 10 (Hwtx-1) family. 08 (Gtx1-15) subfamily. As to expression, expressed by the venom gland.

The protein resides in the secreted. In terms of biological role, potent voltage-gated sodium channel blocker. Potently inhibits the voltage-gated sodium channels Nav1.7/SCN9A (IC(50)=0.58-10 nM). Shows a moderate activity on Nav1.1/SCN1A (IC(50)=6 nM), Nav1.2/SCN2A (IC(50)=5-128 nM), Nav1.3/SCN3A (IC(50)=20.3-170 nM), and Nav1.6/SCN8A (IC(50)=17-20.1 nM). Shows an unclear inhibition of Nav1.4/SCN4A (IC(50)=200 nM to &gt;10 uM), Nav1.5/SCN5A (IC(50)=140 nM to &gt;10 uM) and Nav1.8/SCN10A (IC(50)=68-12200 nM). Weakly blocks the low voltage-gated calcium channels Cav3.1/CACNA1G (30% inhibition of the peak current by 9.8 nM of the toxin). It shows moderate affinity for lipid bilayers. The sequence is that of Toxin GTx1-15 from Grammostola rosea (Chilean rose tarantula).